A 188-amino-acid polypeptide reads, in one-letter code: Nicotinamide-nucleotide adenylyltransferase (188 aa).

Belongs to the archaeal NMN adenylyltransferase family.

Its subcellular location is the cytoplasm. The catalysed reaction is beta-nicotinamide D-ribonucleotide + ATP + H(+) = diphosphate + NAD(+). The protein operates within cofactor biosynthesis; NAD(+) biosynthesis; NAD(+) from nicotinamide D-ribonucleotide: step 1/1. The protein is Nicotinamide-nucleotide adenylyltransferase of Pyrococcus furiosus (strain ATCC 43587 / DSM 3638 / JCM 8422 / Vc1).